Here is a 1174-residue protein sequence, read N- to C-terminus: Creatine kinase, flagellar (1174 aa).

Residues 1–14 (MGCAASSQQTTATG) show a composition bias toward polar residues. The tract at residues 1–62 (MGCAASSQQT…PFVEPDPNYP (62 aa)) is disordered. Low complexity predominate over residues 18–39 (AAGEKANPAPANNNPNAANKAE). The region spanning 53 to 139 (PFVEPDPNYP…FDPTIDKRHN (87 aa)) is the Phosphagen kinase N-terminal 1 domain. One copy of the 1; approximate repeat lies at 61 to 414 (YPDLSKHNNY…EKALEKGSDI (354 aa)). A Phosphagen kinase C-terminal 1 domain is found at 166 to 408 (YVLSCRVRTG…KKLIELEKAL (243 aa)). ATP is bound by residues 169-173 (SCRVR), His232, Arg277, and 333-337 (RAGVH). The Phosphagen kinase N-terminal 2 domain maps to 426-512 (RAEQVKEGYP…FDPVIDARHG (87 aa)). A 2; approximate repeat occupies 434 to 787 (YPDLSKHNNH…EKKLEKGEDI (354 aa)). Residues 539 to 781 (YVLSCRVRTG…ELLVQMEKKL (243 aa)) enclose the Phosphagen kinase C-terminal 2 domain. ATP is bound by residues 542-546 (SCRVR), His605, Arg706, 734-739 (RGTGGV), and Asp749. Positions 800-886 (PIKPFSYDYP…FDPVISARHG (87 aa)) constitute a Phosphagen kinase N-terminal 3 domain. The 3; approximate repeat unit spans residues 808-1161 (YPDFSLHNNW…EKALMKGEDI (354 aa)). The Phosphagen kinase C-terminal 3 domain maps to 913–1155 (FVLSCRVRTG…KLLVNLEKAL (243 aa)).

It belongs to the ATP:guanido phosphotransferase family. As to quaternary structure, monomer.

The protein resides in the cytoplasm. It localises to the cytoskeleton. The protein localises to the flagellum axoneme. It carries out the reaction creatine + ATP = N-phosphocreatine + ADP + H(+). Its function is as follows. This axonemal protein participates in an energy shuttle that utilizes phosphocreatine to transfer the energy from ATP generated by the mitochondrion in the sperm head to dynein in the distal portions of the flagellum. This chain is Creatine kinase, flagellar, found in Strongylocentrotus purpuratus (Purple sea urchin).